The chain runs to 337 residues: DNA-directed RNA polymerase subunit alpha (337 aa).

The segment at 1–233 is alpha N-terminal domain (alpha-NTD); that stretch reads MIREKVTVST…DLFIPFLHME (233 aa). Positions 266–337 are alpha C-terminal domain (alpha-CTD); sequence KLALKSIFID…FAIDLPKNQF (72 aa).

The protein belongs to the RNA polymerase alpha chain family. In plastids the minimal PEP RNA polymerase catalytic core is composed of four subunits: alpha, beta, beta', and beta''. When a (nuclear-encoded) sigma factor is associated with the core the holoenzyme is formed, which can initiate transcription.

The protein localises to the plastid. The protein resides in the chloroplast. The catalysed reaction is RNA(n) + a ribonucleoside 5'-triphosphate = RNA(n+1) + diphosphate. Functionally, DNA-dependent RNA polymerase catalyzes the transcription of DNA into RNA using the four ribonucleoside triphosphates as substrates. This Ipomoea purpurea (Common morning glory) protein is DNA-directed RNA polymerase subunit alpha.